The chain runs to 358 residues: Microbial Terpene synthase-like protein 13 (358 aa).

This sequence belongs to the terpene synthase family.

In terms of biological role, no terpene synthase activity detected in vitro. The polypeptide is Microbial Terpene synthase-like protein 13 (Selaginella moellendorffii (Spikemoss)).